The sequence spans 182 residues: Isopentenyl-diphosphate Delta-isomerase (182 aa).

Mn(2+) contacts are provided by H25 and H32. The region spanning 30-164 (LLHLAFSSWL…PWAFSPWMVM (135 aa)) is the Nudix hydrolase domain. C67 is a catalytic residue. H69 serves as a coordination point for Mn(2+). E87 serves as a coordination point for Mg(2+). Residues E114 and E116 each contribute to the Mn(2+) site. The active site involves E116.

The protein belongs to the IPP isomerase type 1 family. Homodimer. Requires Mg(2+) as cofactor. The cofactor is Mn(2+).

It is found in the cytoplasm. The enzyme catalyses isopentenyl diphosphate = dimethylallyl diphosphate. The protein operates within isoprenoid biosynthesis; dimethylallyl diphosphate biosynthesis; dimethylallyl diphosphate from isopentenyl diphosphate: step 1/1. In terms of biological role, catalyzes the 1,3-allylic rearrangement of the homoallylic substrate isopentenyl (IPP) to its highly electrophilic allylic isomer, dimethylallyl diphosphate (DMAPP). The polypeptide is Isopentenyl-diphosphate Delta-isomerase (Escherichia coli O45:K1 (strain S88 / ExPEC)).